Consider the following 183-residue polypeptide: ATP-dependent protease subunit HslV (183 aa).

The active site involves threonine 13. 3 residues coordinate Na(+): glycine 168, cysteine 171, and threonine 174.

It belongs to the peptidase T1B family. HslV subfamily. A double ring-shaped homohexamer of HslV is capped on each side by a ring-shaped HslU homohexamer. The assembly of the HslU/HslV complex is dependent on binding of ATP.

The protein localises to the cytoplasm. The catalysed reaction is ATP-dependent cleavage of peptide bonds with broad specificity.. Allosterically activated by HslU binding. Functionally, protease subunit of a proteasome-like degradation complex believed to be a general protein degrading machinery. The chain is ATP-dependent protease subunit HslV from Xanthomonas oryzae pv. oryzae (strain MAFF 311018).